The primary structure comprises 258 residues: Undecaprenyl-diphosphatase (258 aa).

8 helical membrane passes run 14–34 (AAGE…PWLL), 39–59 (QGLT…LIYF), 79–99 (GKIL…GVLF), 106–126 (VFRS…ILHL), 136–156 (VALN…ALMP), 176–196 (AESA…AAVL), 209–229 (AFIA…KFLM), and 237–257 (FNIF…TALM).

This sequence belongs to the UppP family.

It is found in the cell membrane. The catalysed reaction is di-trans,octa-cis-undecaprenyl diphosphate + H2O = di-trans,octa-cis-undecaprenyl phosphate + phosphate + H(+). Functionally, catalyzes the dephosphorylation of undecaprenyl diphosphate (UPP). Confers resistance to bacitracin. In Elusimicrobium minutum (strain Pei191), this protein is Undecaprenyl-diphosphatase.